The sequence spans 87 residues: Diazepam-binding inhibitor-like 5 (87 aa).

The ACB domain occupies 2-87 (SQVEFEMACA…VEELKKNETC (86 aa)). Residues 29–33 (YSFYK), lysine 55, and tyrosine 74 each bind an acyl-CoA.

It belongs to the ACBP family. Testis.

The protein localises to the cytoplasm. Functionally, may be involved in the energy metabolism of the mature sperm. The polypeptide is Diazepam-binding inhibitor-like 5 (Dbil5) (Rattus norvegicus (Rat)).